The primary structure comprises 250 residues: Insertion sequence IS232 putative ATP-binding protein (250 aa).

An ATP-binding site is contributed by 108–115 (GPSGVGKT).

This sequence belongs to the IS21/IS1162 putative ATP-binding protein family.

The sequence is that of Insertion sequence IS232 putative ATP-binding protein from Bacillus thuringiensis subsp. berliner.